Here is a 552-residue protein sequence, read N- to C-terminus: FERRY endosomal RAB5 effector complex subunit 3 (552 aa).

Residue S79 is modified to Phosphoserine.

Component of the FERRY complex composed of five subunits, TBCK, PPP1R21, FERRY3, CRYZL1 and GATD1 with a ratio of 1:2:1:2:4, respectively.

The protein localises to the cytoplasm. Its subcellular location is the early endosome. In terms of biological role, component of the FERRY complex (Five-subunit Endosomal Rab5 and RNA/ribosome intermediary). The FERRY complex directly interacts with mRNAs and RAB5A, and functions as a RAB5A effector involved in the localization and the distribution of specific mRNAs most likely by mediating their endosomal transport. The complex recruits mRNAs and ribosomes to early endosomes through direct mRNA-interaction. Plays a role in mast cell degranulation. This is FERRY endosomal RAB5 effector complex subunit 3 from Mus musculus (Mouse).